Reading from the N-terminus, the 416-residue chain is Vacuole membrane protein KMS1 (416 aa).

Glycine 2 is subject to N-acetylglycine. The Cytoplasmic portion of the chain corresponds to 2–60 (GSAGVASSSSDVAISALREKHEKEVENLTLTTQPLNTLKLFVEATIQYIKRSISYLLAH). Residues 61–81 (GGWFILITTLLVVSGGLLVTV) traverse the membrane as a helical segment. At 82–101 (DGPHGKHVEEVLEYVRYGLW) the chain is on the lumenal side. A helical membrane pass occupies residues 102–124 (WIALGVASSIGLGSGLHTFVLYL). Residues 125 to 257 (GPHIALFTLK…WLLTHSQHLN (133 aa)) lie on the Cytoplasmic side of the membrane. Residues 258–278 (FFTVLVLASVPNPLFDLAGIM) form a helical membrane-spanning segment. Residues 279-289 (CGQFGIPFWEF) lie on the Lumenal side of the membrane. A helical membrane pass occupies residues 290-312 (FLATLIGKAIIKTHIQTIFIICV). Over 313 to 323 (CNNQLLDWMEN) the chain is Cytoplasmic. The helical transmembrane segment at 324 to 344 (ELIWILSHVPGLASMLPGLTA) threads the bilayer. Residues 345 to 372 (KLHAMKEKYIDAPSPVPSHIKVKKWDFS) lie on the Lumenal side of the membrane. A helical transmembrane segment spans residues 373–393 (FASIWNGIVWLMLLNFFVKIV). Topologically, residues 394–416 (TATAQRHLKKKQEKEMATLTHSD) are cytoplasmic.

This sequence belongs to the VMP1 family.

Its subcellular location is the endoplasmic reticulum membrane. Functionally, involved in the early secretory pathway. Required for the correct export of secretory products from the endoplasmic reticulum (ER) and involved in the maintenance of ER integrity. This is Vacuole membrane protein KMS1 from Arabidopsis thaliana (Mouse-ear cress).